The following is a 437-amino-acid chain: Histidinol dehydrogenase (437 aa).

NAD(+)-binding residues include Y133, Q191, and N214. Residues S240, Q262, and H265 each contribute to the substrate site. 2 residues coordinate Zn(2+): Q262 and H265. Residues E329 and H330 each act as proton acceptor in the active site. H330, D363, E417, and H422 together coordinate substrate. D363 contributes to the Zn(2+) binding site. Position 422 (H422) interacts with Zn(2+).

Belongs to the histidinol dehydrogenase family. Homodimer. Zn(2+) serves as cofactor.

It catalyses the reaction L-histidinol + 2 NAD(+) + H2O = L-histidine + 2 NADH + 3 H(+). It functions in the pathway amino-acid biosynthesis; L-histidine biosynthesis; L-histidine from 5-phospho-alpha-D-ribose 1-diphosphate: step 9/9. Functionally, catalyzes the sequential NAD-dependent oxidations of L-histidinol to L-histidinaldehyde and then to L-histidine. The chain is Histidinol dehydrogenase from Blochmanniella floridana.